The following is a 231-amino-acid chain: 7-cyano-7-deazaguanine synthase (231 aa).

An ATP-binding site is contributed by 8–18; that stretch reads LSGGLDSATAA. Cys189, Cys197, Cys200, and Cys203 together coordinate Zn(2+).

The protein belongs to the QueC family. Zn(2+) is required as a cofactor.

The enzyme catalyses 7-carboxy-7-deazaguanine + NH4(+) + ATP = 7-cyano-7-deazaguanine + ADP + phosphate + H2O + H(+). It participates in purine metabolism; 7-cyano-7-deazaguanine biosynthesis. Functionally, catalyzes the ATP-dependent conversion of 7-carboxy-7-deazaguanine (CDG) to 7-cyano-7-deazaguanine (preQ(0)). The sequence is that of 7-cyano-7-deazaguanine synthase from Synechococcus elongatus (strain ATCC 33912 / PCC 7942 / FACHB-805) (Anacystis nidulans R2).